The primary structure comprises 180 residues: Inner membrane-spanning protein YciB (180 aa).

5 helical membrane passes run 11–31 (ILFFVVYKLAGIREAAIALII), 52–72 (IIMGIAVVFFGTLTAYFNKVE), 76–96 (WKVTIVYALFALILLISQYGF), 121–141 (LAWAGFFILCMLINIYISQYC), and 149–169 (FKSFGIIAMTFIATLFTGIYV).

It belongs to the YciB family.

The protein localises to the cell inner membrane. In terms of biological role, plays a role in cell envelope biogenesis, maintenance of cell envelope integrity and membrane homeostasis. The sequence is that of Inner membrane-spanning protein YciB from Mannheimia succiniciproducens (strain KCTC 0769BP / MBEL55E).